A 165-amino-acid polypeptide reads, in one-letter code: MELSESTKKALKAIPLMRTKAGPRDGDSWVQRLKEEYEALIAFINNNKAADLDWFRLESNSDGTRWFGKCWHYHNMLRYEFDVEFDIPVTYPTTAPEIALPELDGKTAKMYRGGRICLSDHFKPLWARNVPKFGIAQAFSLGLGPWLAVEVPDLVDRGMIQPKTA.

C117 serves as the catalytic Glycyl thioester intermediate.

This sequence belongs to the ubiquitin-conjugating enzyme family. UFC1 subfamily.

E2-like enzyme which forms an intermediate with UFM1 via a thioester linkage. This is Ubiquitin-fold modifier-conjugating enzyme 1 from Brugia malayi (Filarial nematode worm).